The sequence spans 351 residues: MLKNDLFLRALKRQPCSRTPIWVMRQAGRYLPEYRAVREKTDFLTLCKTPELATEVTIQPVELMGVDAAIIFSDILVVNEAMGMNVEIIESKGIKLTPPIRSQADIDKLIVPDIDEKLGYVLDALRMTKRELDNRVPLIGFTGAAWTLFTYAVEGGGSKNYAYAKKMMYREPAMAHALLGKISGVITAYVLKQIEAGADAIQIFDSWASALSEDDYREYALPYIKDTVQAIKAKYPDTPVIVFSKDCNTILSDIADTGCEAMGLGWGIDIGKARAELGDRVALQGNLDPTVLYGTPDRIKAEASKILKSFGQHTEHSGHVFNLGHGILPDMDPENLKLLVEFVKEESAQYH.

Substrate contacts are provided by residues 25 to 29 (RQAGR), Asp-74, Tyr-151, Ser-206, and His-325.

The protein belongs to the uroporphyrinogen decarboxylase family. In terms of assembly, homodimer.

It localises to the cytoplasm. It carries out the reaction uroporphyrinogen III + 4 H(+) = coproporphyrinogen III + 4 CO2. The protein operates within porphyrin-containing compound metabolism; protoporphyrin-IX biosynthesis; coproporphyrinogen-III from 5-aminolevulinate: step 4/4. In terms of biological role, catalyzes the decarboxylation of four acetate groups of uroporphyrinogen-III to yield coproporphyrinogen-III. The chain is Uroporphyrinogen decarboxylase from Pelodictyon phaeoclathratiforme (strain DSM 5477 / BU-1).